We begin with the raw amino-acid sequence, 262 residues long: 14-3-3 protein epsilon (262 aa).

The interval 236–262 (QAEEVDPNAGDGEPKEQIQDVEDQDVS) is disordered. Phosphoserine is present on S262.

It belongs to the 14-3-3 family. Homodimer. Interacts with phosphorylated yki. Interacts with pav (when serine phosphorylated); the interaction is necessary for association of the complex pav-14-3-3epsilon complex to the microtubules, thereby inhibiting microtubule sliding.

In terms of biological role, positively regulates Ras-mediated pathways. Acts downstream or parallel to Raf, but upstream of nuclear factors in Ras signaling. Three mutants have been isolated, that suppress the rough eye phenotype caused by mutated Ras1 (sev-Ras1 v12). Inhibits yki activity by restricting its nuclear localization. Together with pav, has a role in the inhibition of microtubule sliding during neurite outgrowth. This chain is 14-3-3 protein epsilon (14-3-3epsilon), found in Drosophila melanogaster (Fruit fly).